Consider the following 222-residue polypeptide: tRNA (guanine-N(1)-)-methyltransferase (222 aa).

S-adenosyl-L-methionine contacts are provided by residues G110 and 130–135; that span reads IGDYVL.

This sequence belongs to the RNA methyltransferase TrmD family. Homodimer.

It localises to the cytoplasm. It carries out the reaction guanosine(37) in tRNA + S-adenosyl-L-methionine = N(1)-methylguanosine(37) in tRNA + S-adenosyl-L-homocysteine + H(+). In terms of biological role, specifically methylates guanosine-37 in various tRNAs. The polypeptide is tRNA (guanine-N(1)-)-methyltransferase (Protochlamydia amoebophila (strain UWE25)).